A 389-amino-acid chain; its full sequence is 5-amino-6-(D-ribitylamino)uracil--L-tyrosine 4-hydroxyphenyl transferase (389 aa).

In terms of domain architecture, Radical SAM core spans 56 to 298 (VSYVINRNIN…QAVARLFFGR (243 aa)). [4Fe-4S] cluster contacts are provided by C70, C74, and C77.

This sequence belongs to the radical SAM superfamily. CofH family. As to quaternary structure, consists of two subunits, CofG and CofH. It depends on [4Fe-4S] cluster as a cofactor.

It catalyses the reaction 5-amino-6-(D-ribitylamino)uracil + L-tyrosine + S-adenosyl-L-methionine = 5-amino-5-(4-hydroxybenzyl)-6-(D-ribitylimino)-5,6-dihydrouracil + 2-iminoacetate + 5'-deoxyadenosine + L-methionine + H(+). The protein operates within cofactor biosynthesis; coenzyme F0 biosynthesis. Catalyzes the radical-mediated synthesis of 5-amino-5-(4-hydroxybenzyl)-6-(D-ribitylimino)-5,6-dihydrouracil from 5-amino-6-(D-ribitylamino)uracil and L-tyrosine. This Gloeobacter violaceus (strain ATCC 29082 / PCC 7421) protein is 5-amino-6-(D-ribitylamino)uracil--L-tyrosine 4-hydroxyphenyl transferase.